A 587-amino-acid polypeptide reads, in one-letter code: General negative regulator of transcription subunit 4 (587 aa).

An RING-type zinc finger spans residues 33-78 (CPLCIEPMDITDKNFFPCPCGYQICQFCYNNIRQNPELNGRCPACR). Residues 94 to 128 (EELKMERAKLARKEKERKHREKERKENEYTNRKHL) adopt a coiled-coil conformation. The 92-residue stretch at 137-228 (NLVYVVGINP…YMDGRLIKAA (92 aa)) folds into the RRM domain. A C3H1-type zinc finger spans residues 229–256 (YGTTKYCSSYLRGLPCPNPNCMFLHEPG). Lys-270 is covalently cross-linked (Glycyl lysine isopeptide (Lys-Gly) (interchain with G-Cter in ubiquitin)). Residue Thr-310 is modified to Phosphothreonine. Ser-312 bears the Phosphoserine mark. Residue Thr-326 is modified to Phosphothreonine. Position 360 is a phosphoserine (Ser-360). Residues 370 to 412 (TLNDSLGHHTTPTTENTITSTTTTTNTNATSHSHGSKKKQSLA) form a disordered region. Over residues 377-402 (HHTTPTTENTITSTTTTTNTNATSHS) the composition is skewed to low complexity.

In terms of assembly, forms a NOT protein complex that comprises NOT1, NOT2, NOT3, NOT4 and NOT5. Subunit of the 1.0 MDa CCR4-NOT core complex that contains CCR4, CAF1, NOT1, NOT2, NOT3, NOT4, NOT5, CAF40 and CAF130. In the complex interacts with NOT1. The core complex probably is part of a less characterized 1.9 MDa CCR4-NOT complex.

The protein resides in the cytoplasm. It is found in the nucleus. The catalysed reaction is S-ubiquitinyl-[E2 ubiquitin-conjugating enzyme]-L-cysteine + [acceptor protein]-L-lysine = [E2 ubiquitin-conjugating enzyme]-L-cysteine + N(6)-ubiquitinyl-[acceptor protein]-L-lysine.. It functions in the pathway protein modification; protein ubiquitination. Its function is as follows. E3 ubiquitin-protein ligase component of the CCR4-NOT core complex, which in the nucleus seems to be a general transcription factor, and in the cytoplasm the major mRNA deadenylase involved in mRNA turnover. The NOT protein subcomplex negatively regulates the basal and activated transcription of many genes. Preferentially affects TC-type TATA element-dependent transcription. Could directly or indirectly inhibit component(s) of the general transcription machinery. In the cytoplasm, catalyzes monoubiquitination of RPS7/es7 in response to stalled ribosomes, initiating a HEL2-dependent response that activates the No-Go Decay (NGD) pathway. The chain is General negative regulator of transcription subunit 4 (MOT2) from Saccharomyces cerevisiae (strain ATCC 204508 / S288c) (Baker's yeast).